The chain runs to 1765 residues: RANBP2-like and GRIP domain-containing protein 5/6 (1765 aa).

Position 19 is a phosphothreonine (threonine 19). Serine 21 carries the post-translational modification Phosphoserine. TPR repeat units follow at residues 26–59, 60–93, and 648–681; these read SMKG…QERD, PKAH…NPTQ, and EDAH…VSYW. Disordered stretches follow at residues 760–804 and 924–945; these read GPLY…PRWT and FGIS…NDTG. Residues 778–797 show a composition bias toward low complexity; that stretch reads STPSPTKYSLSPSKSYKYSP. A compositionally biased stretch (basic and acidic residues) spans 931–941; it reads NQEKKREKPLE. A RanBD1 1 domain is found at 1036–1172; it reads HFEPVVQMPE…FEECQRLLLD (137 aa). Disordered stretches follow at residues 1214-1247 and 1306-1330; these read KVTE…PTLE and AKLN…EERD. Positions 1235–1244 are enriched in polar residues; the sequence is IKPNAENTGP. Residues 1317 to 1329 are compositionally biased toward acidic residues; sequence TDEESVVTQEEER. Positions 1333 to 1469 constitute a RanBD1 2 domain; that stretch reads YFEPVVPLPD…FDEAKTAQEK (137 aa). Positions 1580–1593 are enriched in polar residues; that stretch reads NNSETSSVAQSGSE. A disordered region spans residues 1580 to 1621; that stretch reads NNSETSSVAQSGSESKVEPKKCELSKNSDIEQSSDSKVKNLS. The segment covering 1594–1617 has biased composition (basic and acidic residues); it reads SKVEPKKCELSKNSDIEQSSDSKV. The GRIP domain occupies 1702-1752; the sequence is REKSAANLEYLKNVLLQFIFLKPGSERERLLPVINTMLQLSPEEKGKLAAV.

As to expression, expressed in testis.

The protein localises to the cytoplasm. The protein is RANBP2-like and GRIP domain-containing protein 5/6 (RGPD5) of Homo sapiens (Human).